The chain runs to 400 residues: MRISYTPQQEELRRELRSYFATLMTPERREALSSVQGEYGVGNVYRETIAQMGRDGWLALGWPKEYGGQGRSAMDQLIFTDEAAIAGAPVPFLTINSVAPTIMAYGTDEQKRFFLPRIAAGDLHFSIGYSEPGAGTDLANLRTTAVRDGDDYVVNGQKMWTSLIQYADYVWLAVRTNPESSGAKKHRGISVLIVPTTAEGFSWTPVHTMAGPDTSATYYSDVRVPVANRVGEENAGWKLVTNQLNHERVALVSPAPIFGCLREVREWAQNTKDAGGTRLIDSEWVQLNLARVHAKAEVLKLINWELASSQSGPKDAGPSPADASAAKVFGTELATEAYRLLMEVLGTAATLRQNSPGALLRGRVERMHRACLILTFGGGTNEVQRDIIGMVALGLPRANR.

FAD is bound by residues 127–130 (IGYS), Thr-136, and Ser-162. Glu-247 serves as the catalytic Proton acceptor. 380-382 (TNE) serves as a coordination point for FAD.

The protein belongs to the acyl-CoA dehydrogenase family. As to quaternary structure, heterotetramer (dimer of heterodimers) composed of FadE26 and FadE27. The cofactor is FAD.

It carries out the reaction (25S)-3-oxocholest-4-en-26-oyl-CoA + A = 3-oxo-cholest-4,24-dien-26-oyl-CoA + AH2. The protein operates within steroid metabolism; cholesterol degradation. Its activity is regulated as follows. Uncompetitively inhibited by high concentration of 3-OCS-CoA. Functionally, involved in the first cycle of side chain dehydrogenation in the beta-oxidation of cholesterol catabolism. It contributes partly to the virulence by increasing the efficiency of beta-oxidation. Catalyzes the dehydrogenation of acyl-CoA ester side chains of (25S)-3-oxo-cholest-4-en-26-oyl-CoA (3-OCS-CoA) to yield (24E)-3-oxo-cholest-4,24-dien-26-oyl-CoA. Also able to dehydrogenate steroyl-CoA such as 3-oxo-chol-4-en-24-oyl-CoA (3-OCO-CoA) as well as 3-oxo-4-pregnene-20-carboxyl-CoA (3-OPC-CoA). It dehydrogenates only (25S)-OCS-CoA diastereomer. This Mycobacterium tuberculosis (strain ATCC 25618 / H37Rv) protein is Acyl-CoA dehydrogenase FadE26 (fadE26).